The following is a 394-amino-acid chain: 1-deoxy-D-xylulose 5-phosphate reductoisomerase (394 aa).

T13, G14, S15, V16, R40, Q41, and N127 together coordinate NADPH. K128 contributes to the 1-deoxy-D-xylulose 5-phosphate binding site. E129 serves as a coordination point for NADPH. Residue D153 coordinates Mn(2+). 1-deoxy-D-xylulose 5-phosphate is bound by residues S154, E155, S184, and H207. E155 contributes to the Mn(2+) binding site. G213 contributes to the NADPH binding site. 4 residues coordinate 1-deoxy-D-xylulose 5-phosphate: S220, N225, K226, and E229. E229 provides a ligand contact to Mn(2+).

This sequence belongs to the DXR family. Mg(2+) is required as a cofactor. Requires Mn(2+) as cofactor.

The enzyme catalyses 2-C-methyl-D-erythritol 4-phosphate + NADP(+) = 1-deoxy-D-xylulose 5-phosphate + NADPH + H(+). It functions in the pathway isoprenoid biosynthesis; isopentenyl diphosphate biosynthesis via DXP pathway; isopentenyl diphosphate from 1-deoxy-D-xylulose 5-phosphate: step 1/6. Catalyzes the NADPH-dependent rearrangement and reduction of 1-deoxy-D-xylulose-5-phosphate (DXP) to 2-C-methyl-D-erythritol 4-phosphate (MEP). In Chromobacterium violaceum (strain ATCC 12472 / DSM 30191 / JCM 1249 / CCUG 213 / NBRC 12614 / NCIMB 9131 / NCTC 9757 / MK), this protein is 1-deoxy-D-xylulose 5-phosphate reductoisomerase.